The chain runs to 120 residues: Large ribosomal subunit protein uL18 (120 aa).

Belongs to the universal ribosomal protein uL18 family. In terms of assembly, part of the 50S ribosomal subunit; part of the 5S rRNA/L5/L18/L25 subcomplex. Contacts the 5S and 23S rRNAs.

This is one of the proteins that bind and probably mediate the attachment of the 5S RNA into the large ribosomal subunit, where it forms part of the central protuberance. This Rhizobium johnstonii (strain DSM 114642 / LMG 32736 / 3841) (Rhizobium leguminosarum bv. viciae) protein is Large ribosomal subunit protein uL18.